We begin with the raw amino-acid sequence, 204 residues long: Allatotropin (204 aa).

The signal sequence occupies residues 1–20; the sequence is MNLTMQLAVIVAVCLCLAEG. A propeptide spanning residues 21 to 35 is cleaved from the precursor; it reads APDVRLTRTKQQRPT. The segment at 47–83 is disordered; that stretch reads RGFGKRDRPHPRAERDVDHQAPSARPNRGTPTFKSPT. The residue at position 49 (Phe-49) is a Phenylalanine amide. Positions 50–65 are enriched in basic and acidic residues; the sequence is GKRDRPHPRAERDVDH. Positions 53–204 are excised as a propeptide; it reads DRPHPRAERD…LSSEELLRNF (152 aa).

As to expression, expressed extensively in the brain, frontal ganglion and terminal ganglion of the day 2 fifth instar larva (at protein level). Not expressed in the larval brain after day 4 of the fifth instar, or in the brain of the pupa or adult. Expression in the terminal ganglion is localized to cells in the posterior portion of the seventh neuromere of day 2 fifth instar larvae. In the pupa and adult expression is detected in the medial region of neuromere 6, the dorsal medial region of neuromere 7, and the posterior neuromere of the terminal ganglion (at protein level). In the frontal ganglion expression decreases in the wandering larvae and is present at low levels in during pupal ecdysis, but is not detected in the adult. Expressed in the subesophageal ganglion of day 2 fifth instar larva, but not at any time before or after day 2. Not expressed in the abdominal ganglia 1-6 of the day 2 fifth instar larva (at protein level). Expressed in the anterior neuromeres of the pterothoracic ganglion in pupa but not in adult (at protein level). Expressed in the unfused abdominal ganglia of day 10 pupae, and in pharate adult is expressed in median neurosecretory cells M1, M2 and M5, but not in median neurosecretory cells M3 and M4 (at protein level). Not expressed in the differentiated median neurosecretory cells M5 of the larva (at protein level). In the pharate adult brain isoform 3 is the predominant form, with lower levels of isoform 2 and very low levels of isoform 1 detected. In the pharate adult nerve cord isoform 3 is the predominant form, with lower levels of isoform 2 and no isoform 1 detected. In the pharate adult frontal ganglion isoform 3 is expressed, but not isoform 1 and isoform 2.

It localises to the secreted. Neuropeptide stimulator of juvenile hormone synthesis. Cardioregulatory neurohormone that increases heart beat rate in the adult but not in the larva. Inhibits active ion transport in the midgut of feeding fourth instar and day 2 fifth instar larva, but not in the midgut of pharate or wandering fifth instar larva. This Manduca sexta (Tobacco hawkmoth) protein is Allatotropin.